Consider the following 138-residue polypeptide: Proofreading thioesterase EntH (138 aa).

The Nucleophile or proton acceptor role is filled by glutamate 64.

This sequence belongs to the thioesterase PaaI family. As to quaternary structure, homotetramer. Dimer of dimers. Interacts specifically with the aryl carrier protein (ArCP) domain of EntB.

The protein resides in the cytoplasm. Its pathway is siderophore biosynthesis; enterobactin biosynthesis. Required for optimal enterobactin synthesis. Acts as a proofreading enzyme that prevents EntB misacylation by hydrolyzing the thioester bound existing between EntB and wrongly charged molecules. This Citrobacter rodentium (strain ICC168) (Citrobacter freundii biotype 4280) protein is Proofreading thioesterase EntH.